We begin with the raw amino-acid sequence, 612 residues long: uncharacterized protein (612 aa).

Its subcellular location is the plastid. The protein localises to the chloroplast. This is an uncharacterized protein from Pyropia yezoensis (Susabi-nori).